Consider the following 547-residue polypeptide: Solute carrier family 22 member 7 (547 aa).

The next 12 membrane-spanning stretches (helical) occupy residues 21 to 41 (VALL…PIFL), 145 to 165 (ATST…GYLS), 173 to 193 (LLLV…ASVS), 203 to 223 (LTGT…LEWL), 233 to 253 (VLSS…GYLI), 258 to 278 (WLLL…WWVP), 345 to 365 (ISLC…GLSL), 374 to 396 (VYQT…YLSV), 403 to 423 (LTLA…LLVS), 431 to 451 (TALA…AYLF), 465 to 485 (MGLT…AALL), and 492 to 512 (LPKL…LLLP). The interval 521–547 (ETIQDVERKSAPSSLQEEEMPMKQVQD) is disordered.

The protein belongs to the major facilitator (TC 2.A.1) superfamily. Organic cation transporter (TC 2.A.1.19) family.

The protein resides in the basolateral cell membrane. It is found in the apical cell membrane. It localises to the cell membrane. The catalysed reaction is orotate(out) + L-glutamate(in) = orotate(in) + L-glutamate(out). The enzyme catalyses 3',5'-cyclic GMP(in) = 3',5'-cyclic GMP(out). It carries out the reaction GMP(in) = GMP(out). It catalyses the reaction 2'-deoxyguanosine(in) = 2'-deoxyguanosine(out). The catalysed reaction is GDP(in) = GDP(out). The enzyme catalyses guanosine(in) = guanosine(out). It carries out the reaction GTP(in) = GTP(out). It catalyses the reaction 3',5'-cyclic AMP(in) = 3',5'-cyclic AMP(out). The catalysed reaction is creatinine(in) = creatinine(out). The enzyme catalyses prostaglandin E2(out) = prostaglandin E2(in). It carries out the reaction 2-oxoglutarate(in) = 2-oxoglutarate(out). It catalyses the reaction glutarate(in) = glutarate(out). The catalysed reaction is urate(out) = urate(in). The enzyme catalyses estrone 3-sulfate(out) = estrone 3-sulfate(in). Its function is as follows. Functions as a Na(+)-independent bidirectional multispecific transporter. Contributes to the renal and hepatic elimination of endogenous organic compounds from the systemic circulation into the urine and bile, respectively. Capable of transporting a wide range of purine and pyrimidine nucleobases, nucleosides and nucleotides, with cGMP, 2'deoxyguanosine and GMP being the preferred substrates. Functions as a pH- and chloride-independent cGMP bidirectional facilitative transporter that can regulate both intracellular and extracellular levels of cGMP and may be involved in cGMP signaling pathways. Mediates orotate/glutamate bidirectional exchange and most likely display a physiological role in hepatic release of glutamate into the blood. Involved in renal secretion and possible reabsorption of creatinine. Able to uptake prostaglandin E2 (PGE2) and may contribute to PGE2 renal excretion. Also transports alpha-ketoglutarate and urate. Apart from the orotate/glutamate exchange, the counterions for the uptake of other SLC22A7/OAT2 substrates remain to be identified. This is Solute carrier family 22 member 7 (SLC22A7) from Sus scrofa (Pig).